The chain runs to 287 residues: MAKLRHSRFQARKWSTLMLVLFMLFMLTIVLLMLLAFGVFSLPINNDESSPIDLSYFRRAATERSEGLGKRGDQWTEVLSWEPRAFVYHNFLSKEECEYLISLAKPHMVKSTVVDSETGKSKDSRVRTSSGTFLRRGRDKIIKTIEKRIADYTFIPADHGEGLQVLHYEAGQKYEPHYDYFVDEFNTKNGGQRMATMLMYLSDVEEGGETVFPAANMNFSSVPWYNELSECGKKGLSVKPRMGDALLFWSMRPDATLDPTSLHGGCPVIRGNKWSSTKWMHVGEYKI.

Topologically, residues 1 to 16 (MAKLRHSRFQARKWST) are cytoplasmic. Residues 17–37 (LMLVLFMLFMLTIVLLMLLAF) form a helical; Signal-anchor for type II membrane protein membrane-spanning segment. Residues 38–287 (GVFSLPINND…KWMHVGEYKI (250 aa)) lie on the Lumenal side of the membrane. The region spanning 159-282 (HGEGLQVLHY…KWSSTKWMHV (124 aa)) is the Fe2OG dioxygenase domain. Residues His177 and Asp179 each coordinate Fe cation. Asn218 carries an N-linked (GlcNAc...) asparagine glycan. His263 provides a ligand contact to Fe cation. Lys273 serves as a coordination point for 2-oxoglutarate.

The protein belongs to the P4HA family. Fe(2+) is required as a cofactor. Requires L-ascorbate as cofactor.

Its subcellular location is the endoplasmic reticulum membrane. It catalyses the reaction L-prolyl-[collagen] + 2-oxoglutarate + O2 = trans-4-hydroxy-L-prolyl-[collagen] + succinate + CO2. In terms of biological role, catalyzes the post-translational formation of 4-hydroxyproline in -Xaa-Pro-Gly- sequences in proline-rich peptide sequences of plant glycoproteins and other proteins. Hydroxyprolines are important constituent of many plant cell wall glycoproteins such as extensins, hydroxyproline-rich glycoproteins, lectins and arabinogalactan proteins. This chain is Probable prolyl 4-hydroxylase 3, found in Arabidopsis thaliana (Mouse-ear cress).